The primary structure comprises 664 residues: UV-stimulated scaffold protein A homolog (664 aa).

Residues K10–P153 form a VHS-like region. A coiled-coil region spans residues L148 to K180. 2 disordered regions span residues H330–V350 and M362–L403. Residues E334–D347 show a composition bias toward acidic residues. The span at R363–S374 shows a compositional bias: polar residues. The span at E377 to S387 shows a compositional bias: basic and acidic residues. The segment covering N388 to S402 has biased composition (polar residues). Residues T473–I500 form a UVSSA-type zinc finger. C476, C486, C494, and H497 together coordinate Zn(2+). Disordered stretches follow at residues S514 to Q546 and V640 to W664. 2 stretches are compositionally biased toward polar residues: residues N521–V533 and V640–Q650.

It belongs to the UVSSA family.

The protein resides in the chromosome. This Arabidopsis thaliana (Mouse-ear cress) protein is UV-stimulated scaffold protein A homolog.